We begin with the raw amino-acid sequence, 450 residues long: Chromosomal replication initiator protein DnaA (450 aa).

The segment at 1–73 is domain I, interacts with DnaA modulators; that stretch reads MNTKELWIEV…KNILKKLTGI (73 aa). Residues 73 to 104 are domain II; that stretch reads IQYNISFELEKNINKQASVISKIDTLTENNNL. The tract at residues 105–326 is domain III, AAA+ region; that stretch reads AYYENYTFEN…GAIKRLLFLA (222 aa). ATP contacts are provided by Gly-149, Gly-151, Lys-152, and Thr-153. A domain IV, binds dsDNA region spans residues 327-450; sequence VMNKKPNEII…NAIRRKIEGR (124 aa).

This sequence belongs to the DnaA family. In terms of assembly, oligomerizes as a right-handed, spiral filament on DNA at oriC.

It localises to the cytoplasm. Functionally, plays an essential role in the initiation and regulation of chromosomal replication. ATP-DnaA binds to the origin of replication (oriC) to initiate formation of the DNA replication initiation complex once per cell cycle. Binds the DnaA box (a 9 base pair repeat at the origin) and separates the double-stranded (ds)DNA. Forms a right-handed helical filament on oriC DNA; dsDNA binds to the exterior of the filament while single-stranded (ss)DNA is stabiized in the filament's interior. The ATP-DnaA-oriC complex binds and stabilizes one strand of the AT-rich DNA unwinding element (DUE), permitting loading of DNA polymerase. After initiation quickly degrades to an ADP-DnaA complex that is not apt for DNA replication. Binds acidic phospholipids. In Spiroplasma citri, this protein is Chromosomal replication initiator protein DnaA.